The chain runs to 489 residues: tRNA(Ile)-lysidine synthase (489 aa).

35 to 40 (SGGLDS) is an ATP binding site.

The protein belongs to the tRNA(Ile)-lysidine synthase family.

Its subcellular location is the cytoplasm. The catalysed reaction is cytidine(34) in tRNA(Ile2) + L-lysine + ATP = lysidine(34) in tRNA(Ile2) + AMP + diphosphate + H(+). Its function is as follows. Ligates lysine onto the cytidine present at position 34 of the AUA codon-specific tRNA(Ile) that contains the anticodon CAU, in an ATP-dependent manner. Cytidine is converted to lysidine, thus changing the amino acid specificity of the tRNA from methionine to isoleucine. The protein is tRNA(Ile)-lysidine synthase of Burkholderia pseudomallei (strain K96243).